The sequence spans 340 residues: Serine/threonine-protein kinase PDIK1L (340 aa).

In terms of domain architecture, Protein kinase spans 8-333 (YDLIREVGRG…LELRLVQIAF (326 aa)). ATP-binding positions include 14–22 (VGRGSYGVV) and lysine 37. Catalysis depends on aspartate 164, which acts as the Proton acceptor.

Belongs to the protein kinase superfamily. Ser/Thr protein kinase family.

It is found in the nucleus. It carries out the reaction L-seryl-[protein] + ATP = O-phospho-L-seryl-[protein] + ADP + H(+). The enzyme catalyses L-threonyl-[protein] + ATP = O-phospho-L-threonyl-[protein] + ADP + H(+). The protein is Serine/threonine-protein kinase PDIK1L (PDIK1L) of Pongo abelii (Sumatran orangutan).